Reading from the N-terminus, the 308-residue chain is Transcriptional adapter 1-1 (308 aa).

This sequence belongs to the TADA1 family. Component of the Spt-Ada-Gcn5 acetyltransferase (SAGA) complex consisting of wda/Taf5L, Saf6, Taf9, Taf10b, Taf12, Ada1, Spt3, Spt7, Spt20, Sf3b3, Sf3b5, Nipped-A/Tra1, a histone acetyltransferase (HAT) module made up of Gcn5, Ada2b (Isoform B), Ada3 and Sgf29, and a deubiquitinase (DUB) module made up of not/nonstop, Sgf11 and e(y)2 tethered to SAGA by Atxn7. Not a component of the Ada2a-containing ATAC complex.

The protein resides in the nucleus. Component of the transcription regulatory complex SAGA, a multiprotein complex that activates transcription by remodeling chromatin and mediating histone acetylation and deubiquitination. The SAGA complex predominantly acetylates histone H3. In Drosophila melanogaster (Fruit fly), this protein is Transcriptional adapter 1-1.